We begin with the raw amino-acid sequence, 171 residues long: Phosphopantetheine adenylyltransferase (171 aa).

Substrate is bound at residue Thr-10. ATP is bound by residues 10-11 and His-18; that span reads TF. The substrate site is built by Lys-42, Thr-74, and Arg-88. Residues 89-91, Glu-99, and 124-130 each bind ATP; these read GLR and WACLSSK.

The protein belongs to the bacterial CoaD family. As to quaternary structure, homohexamer. Mg(2+) serves as cofactor.

It localises to the cytoplasm. It carries out the reaction (R)-4'-phosphopantetheine + ATP + H(+) = 3'-dephospho-CoA + diphosphate. It participates in cofactor biosynthesis; coenzyme A biosynthesis; CoA from (R)-pantothenate: step 4/5. Its function is as follows. Reversibly transfers an adenylyl group from ATP to 4'-phosphopantetheine, yielding dephospho-CoA (dPCoA) and pyrophosphate. This is Phosphopantetheine adenylyltransferase from Blochmanniella pennsylvanica (strain BPEN).